A 559-amino-acid chain; its full sequence is Serine/threonine-protein kinase bur1 (559 aa).

One can recognise a Protein kinase domain in the interval 40 to 341; the sequence is YEVLGKLGEG…AIDALNHPYF (302 aa). Residues 46–54 and lysine 69 contribute to the ATP site; that span reads LGEGTFGEV. Aspartate 171 serves as the catalytic Proton acceptor. Residues 359–372 show a composition bias toward basic and acidic residues; the sequence is SHEFDRRKFQDRKA. The interval 359–559 is disordered; sequence SHEFDRRKFQ…GRDRDAYARR (201 aa). Gly residues predominate over residues 400–414; that stretch reads GRDGYGGGGRNGANG. Basic and acidic residues-rich tracts occupy residues 457–467, 491–534, and 543–559; these read DHTDGYRDRPP, YDRD…DSRT, and PVRD…YARR.

It belongs to the protein kinase superfamily. CMGC Ser/Thr protein kinase family. CDC2/CDKX subfamily.

It localises to the nucleus. It catalyses the reaction L-seryl-[protein] + ATP = O-phospho-L-seryl-[protein] + ADP + H(+). It carries out the reaction L-threonyl-[protein] + ATP = O-phospho-L-threonyl-[protein] + ADP + H(+). The enzyme catalyses [DNA-directed RNA polymerase] + ATP = phospho-[DNA-directed RNA polymerase] + ADP + H(+). In terms of biological role, serine/threonine-protein kinase involved in transcription regulation. Phosphorylates the mus-8/ubc2 ubiquitin-conjugating enzyme (E2), leading to monoubiquitination of histone H2B and the silencing of telomeric-associated genes. Also required for histone H3 methylation. Necessary for the recovery from pheromone-induced growth arrest in the cell cycle G1 phase. This Neurospora crassa (strain ATCC 24698 / 74-OR23-1A / CBS 708.71 / DSM 1257 / FGSC 987) protein is Serine/threonine-protein kinase bur1 (stk-1).